The following is a 62-amino-acid chain: Ferredoxin-1 (62 aa).

2 4Fe-4S ferredoxin-type domains span residues 3 to 32 (WTVT…LQDG) and 33 to 62 (KAVP…VEEN). Positions 12 and 18 each coordinate [3Fe-4S] cluster. [4Fe-4S] cluster is bound by residues C22, C42, C45, and C48. Residue C52 coordinates [3Fe-4S] cluster.

In terms of assembly, homodimer. It depends on [3Fe-4S] cluster as a cofactor. [4Fe-4S] cluster serves as cofactor.

In terms of biological role, ferredoxins are iron-sulfur proteins that transfer electrons in a wide variety of metabolic reactions. This ferredoxin serves as a carrier for pyruvate dehydrogenase. This Nitratidesulfovibrio vulgaris (strain DSM 19637 / Miyazaki F) (Desulfovibrio vulgaris) protein is Ferredoxin-1.